The chain runs to 133 residues: Holo-[acyl-carrier-protein] synthase (133 aa).

Mg(2+)-binding residues include Asp-8 and Glu-58.

It belongs to the P-Pant transferase superfamily. AcpS family. Requires Mg(2+) as cofactor.

The protein localises to the cytoplasm. The enzyme catalyses apo-[ACP] + CoA = holo-[ACP] + adenosine 3',5'-bisphosphate + H(+). Transfers the 4'-phosphopantetheine moiety from coenzyme A to a Ser of acyl-carrier-protein. This chain is Holo-[acyl-carrier-protein] synthase, found in Erythrobacter litoralis (strain HTCC2594).